The primary structure comprises 606 residues: Ubiquitin-like modifier-activating enzyme ATG7 (606 aa).

Positions 316–321 match the GXGXXG motif motif; sequence GSGTLG. Cys488 serves as the catalytic Glycyl thioester intermediate. A homodimerization region spans residues 567–606; it reads ALDDYKCVEKLSGLSKVQEEAELALEEDFDFSEDDEFVTG.

This sequence belongs to the ATG7 family. As to quaternary structure, homodimer. Interacts with ATG8 through a thioester bond between Cys-488 and the C-terminal Gly of ATG8 and with ATG12 through a thioester bond between Cys-488 and the C-terminal Gly of ATG12. Also interacts with ATG3.

The protein resides in the cytoplasm. Its subcellular location is the preautophagosomal structure. In terms of biological role, E1-like activating enzyme involved in the 2 ubiquitin-like systems required for cytoplasm to vacuole transport (Cvt) and autophagy. Activates ATG12 for its conjugation with ATG5 and ATG8 for its conjugation with phosphatidylethanolamine. Both systems are needed for the ATG8 association to Cvt vesicles and autophagosomes membranes. Autophagy is essential for maintenance of amino acid levels and protein synthesis under nitrogen starvation. Required for selective autophagic degradation of the nucleus (nucleophagy) as well as for mitophagy which contributes to regulate mitochondrial quantity and quality by eliminating the mitochondria to a basal level to fulfill cellular energy requirements and preventing excess ROS production. The protein is Ubiquitin-like modifier-activating enzyme ATG7 of Kluyveromyces marxianus (strain DMKU3-1042 / BCC 29191 / NBRC 104275) (Yeast).